The sequence spans 341 residues: Phenylalanine--tRNA ligase alpha subunit (341 aa).

Glu256 contacts Mg(2+).

This sequence belongs to the class-II aminoacyl-tRNA synthetase family. Phe-tRNA synthetase alpha subunit type 1 subfamily. In terms of assembly, tetramer of two alpha and two beta subunits. Mg(2+) serves as cofactor.

It localises to the cytoplasm. The catalysed reaction is tRNA(Phe) + L-phenylalanine + ATP = L-phenylalanyl-tRNA(Phe) + AMP + diphosphate + H(+). The chain is Phenylalanine--tRNA ligase alpha subunit from Leptospira borgpetersenii serovar Hardjo-bovis (strain JB197).